The following is a 535-amino-acid chain: Dynein axonemal assembly factor 8 (535 aa).

Disordered regions lie at residues 112–215, 228–267, 344–380, 395–444, and 461–535; these read AELA…QERR, RDAC…EGPP, PADT…QGMR, TVPP…LRSC, and IAQP…LDQL. Basic and acidic residues predominate over residues 125 to 139; it reads RTKDASSQEGRDPGR. Over residues 166–175 the composition is skewed to polar residues; that stretch reads GSLSFNTKGS. Phosphoserine is present on S175. At S362 the chain carries Phosphoserine. Over residues 415–424 the composition is skewed to acidic residues; sequence DSEEEEEEVE. Residues 435 to 444 show a composition bias toward polar residues; the sequence is SPSSLGLRSC.

The protein resides in the dynein axonemal particle. Its subcellular location is the cytoplasm. In terms of biological role, in cyliated cells, dynein axonemal particle-specific protein required for deployment of ODA to the axoneme. Interacts with outer dynein arm (ODA) subunits. The sequence is that of Dynein axonemal assembly factor 8 (DNAAF8) from Macaca fascicularis (Crab-eating macaque).